The sequence spans 95 residues: Protein TusB (95 aa).

This sequence belongs to the DsrH/TusB family. Heterohexamer, formed by a dimer of trimers. The hexameric TusBCD complex contains 2 copies each of TusB, TusC and TusD. The TusBCD complex interacts with TusE.

It localises to the cytoplasm. Functionally, part of a sulfur-relay system required for 2-thiolation of 5-methylaminomethyl-2-thiouridine (mnm(5)s(2)U) at tRNA wobble positions. This Photorhabdus laumondii subsp. laumondii (strain DSM 15139 / CIP 105565 / TT01) (Photorhabdus luminescens subsp. laumondii) protein is Protein TusB.